The chain runs to 257 residues: AN1-type zinc finger protein 2B (257 aa).

AN1-type zinc fingers lie at residues 4-52 (PDLG…QKDI) and 94-142 (KIFT…HPTS). Zn(2+)-binding residues include Cys-10, Cys-15, Cys-25, Cys-28, Cys-33, His-36, His-42, Cys-44, Cys-100, Cys-105, Cys-115, Cys-118, Cys-123, His-126, His-132, and Cys-134. The interval 141–151 (TSRAGLAAISR) is VCP/p97-interacting motif (VIM). A disordered region spans residues 153 to 187 (QAVASTSTVPSPSQTMPSCTSPSRATTRSPSWTAP). Residues 155-171 (VASTSTVPSPSQTMPSC) are compositionally biased toward polar residues. Phosphoserine occurs at positions 163 and 173. A compositionally biased stretch (low complexity) spans 172–186 (TSPSRATTRSPSWTA). 2 consecutive UIM domains span residues 197–216 (SEDEALQRALEMSLAETKPQ) and 221–240 (QEEEDLALAQALSASEAEYQ). Position 254 is a cysteine methyl ester (Cys-254). Residue Cys-254 is the site of S-geranylgeranyl cysteine attachment. The CAAX motif motif lies at 254–257 (CSLC). A propeptide spans 255 to 257 (SLC) (removed in mature form).

Binds 'Lys-48'-linked polyubiquitin chains of ubiquitinated proteins. Associates with the proteasome complex; upon exposure to arsenite. Interacts (via VIM motif) with VCP; the interaction is direct. Interacts with BAG6. Interacts with IGF1R (nascent precursor form). Interacts with DERL1, FAF2, NPLOC4 and UFD1; probably through VCP. Post-translationally, phosphorylated by MAPK14. Phosphorylation has no effect on association with the proteasome complex.

It localises to the endoplasmic reticulum membrane. Its function is as follows. Plays a role in protein homeostasis by regulating both the translocation and the ubiquitin-mediated proteasomal degradation of nascent proteins at the endoplasmic reticulum. It is involved in the regulation of signal-mediated translocation of proteins into the endoplasmic reticulum. It also plays a role in the ubiquitin-mediated proteasomal degradation of proteins for which signal-mediated translocation to the endoplasmic reticulum has failed. May therefore function in the endoplasmic reticulum stress-induced pre-emptive quality control, a mechanism that selectively attenuates the translocation of newly synthesized proteins into the endoplasmic reticulum and reroutes them to the cytosol for proteasomal degradation. By controlling the steady-state expression of the IGF1R receptor, indirectly regulates the insulin-like growth factor receptor signaling pathway. This Homo sapiens (Human) protein is AN1-type zinc finger protein 2B.